The primary structure comprises 247 residues: Anionic trypsin (247 aa).

An N-terminal signal peptide occupies residues Met1–Ala15. Residues Thr16–Lys23 constitute a propeptide, activation peptide. In terms of domain architecture, Peptidase S1 spans Ile24–Ala244. Cystine bridges form between Cys30–Cys160, Cys48–Cys64, Cys132–Cys233, Cys139–Cys206, Cys171–Cys185, and Cys196–Cys220. Catalysis depends on His63, which acts as the Charge relay system. Residues Glu75, Asn77, Val80, and Glu85 each contribute to the Ca(2+) site. Asp107 acts as the Charge relay system in catalysis. Ser200 acts as the Charge relay system in catalysis.

The protein belongs to the peptidase S1 family. It depends on Ca(2+) as a cofactor.

It localises to the secreted. The protein resides in the extracellular space. The enzyme catalyses Preferential cleavage: Arg-|-Xaa, Lys-|-Xaa.. The protein is Anionic trypsin of Canis lupus familiaris (Dog).